We begin with the raw amino-acid sequence, 446 residues long: Exodeoxyribonuclease 7 large subunit (446 aa).

Belongs to the XseA family. In terms of assembly, heterooligomer composed of large and small subunits.

It is found in the cytoplasm. It carries out the reaction Exonucleolytic cleavage in either 5'- to 3'- or 3'- to 5'-direction to yield nucleoside 5'-phosphates.. In terms of biological role, bidirectionally degrades single-stranded DNA into large acid-insoluble oligonucleotides, which are then degraded further into small acid-soluble oligonucleotides. The protein is Exodeoxyribonuclease 7 large subunit of Acholeplasma laidlawii (strain PG-8A).